The chain runs to 291 residues: MPNLKDLKNRIASVKSTRKITKAMQMVAAAKLRRAQESAEAARPYAERFNAVMAGLAASVGGSDSAPLLLRGTGSDQVHLLVVMTAERGLCGGFNSNIAKLARVRANELLAKGKTVKILTVGKKGRDAMKRDFAANMVGHVDLSGIKALGYANAQDIARDVLGRFDAGEFDVATIFYAKFQNVVTQLPTAQQIIPAAFEAEGESDEVALFDYEPSEEAILADLLPRGVATQIFSALLENGASEQGARMSAMDNATRNAGEMIDKLTIEFNRSRQAVITNELIEIISGAEAL.

The protein belongs to the ATPase gamma chain family. F-type ATPases have 2 components, CF(1) - the catalytic core - and CF(0) - the membrane proton channel. CF(1) has five subunits: alpha(3), beta(3), gamma(1), delta(1), epsilon(1). CF(0) has three main subunits: a, b and c.

The protein localises to the cell inner membrane. In terms of biological role, produces ATP from ADP in the presence of a proton gradient across the membrane. The gamma chain is believed to be important in regulating ATPase activity and the flow of protons through the CF(0) complex. The sequence is that of ATP synthase gamma chain from Ruegeria pomeroyi (strain ATCC 700808 / DSM 15171 / DSS-3) (Silicibacter pomeroyi).